We begin with the raw amino-acid sequence, 594 residues long: (-)-endo-fenchol synthase, chloroplastic (594 aa).

The N-terminal 50 residues, 1–50 (MSSLVMHVGIVNKPAITYLPTLSRSASNLHNVSSTRLQTSCSLQLDYKPV), are a transit peptide targeting the chloroplast. Mg(2+)-binding residues include D348, D352, D492, and E500. Positions 348–352 (DDIYD) match the DDXXD motif motif.

This sequence belongs to the terpene synthase family. Tpsa subfamily. Mg(2+) serves as cofactor. Requires Mn(2+) as cofactor. Expressed at high levels in leaves.

The protein resides in the plastid. The protein localises to the chloroplast. It carries out the reaction (2E)-geranyl diphosphate = alpha-pinene + diphosphate. The enzyme catalyses (2E)-geranyl diphosphate + H2O = (1S,2S,4R)-endo-fenchol + diphosphate. The catalysed reaction is (2E)-geranyl diphosphate = limonene + diphosphate. It functions in the pathway secondary metabolite biosynthesis; terpenoid biosynthesis. In terms of biological role, monoterpene synthase involved in the biosynthesis of volatile compounds widely used in aromatherapy and folk medicine, and present in culinary herbs. Mediates the conversion of (2E)-geranyl diphosphate (GPP) into alpha fenchol, limonene and alpha-pinene and, as minor compounds, into beta-myrcene, alpha-terpinolene and alpha-phellandrene. This chain is (-)-endo-fenchol synthase, chloroplastic, found in Lavandula pedunculata subsp. lusitanica (French lavender).